Reading from the N-terminus, the 241-residue chain is Phosphoribosylaminoimidazole-succinocarboxamide synthase (241 aa).

It belongs to the SAICAR synthetase family.

The catalysed reaction is 5-amino-1-(5-phospho-D-ribosyl)imidazole-4-carboxylate + L-aspartate + ATP = (2S)-2-[5-amino-1-(5-phospho-beta-D-ribosyl)imidazole-4-carboxamido]succinate + ADP + phosphate + 2 H(+). The protein operates within purine metabolism; IMP biosynthesis via de novo pathway; 5-amino-1-(5-phospho-D-ribosyl)imidazole-4-carboxamide from 5-amino-1-(5-phospho-D-ribosyl)imidazole-4-carboxylate: step 1/2. The protein is Phosphoribosylaminoimidazole-succinocarboxamide synthase of Methanoculleus marisnigri (strain ATCC 35101 / DSM 1498 / JR1).